A 668-amino-acid polypeptide reads, in one-letter code: MPLTPGTLLAGRYELLALLGEGGSAQVYRAQDGLLGREVALKVMHDYLPESDRSRFLREVRTLARLTHPGVVPVLDLGQEPEAGRPFFTMPLLTGGPITRLGPLEDAPGPLARFLTAAAFASRALHHVHSHGIVHRDLTPGNVLLDDTGLPRIMDFGLVALSEQTRHLTRSGVTLGTPAYMAPEQAKGGGVDARSDLYALGAVLYRVACGSPPFVGDSDQSVLYQHVYEPVPDPRDLNPAVPDAVARVLLWLLAKRADRRPQSGAALAHLWALARRDLWTTHARGQYRGGRARTGEHPDGPARVSDMQELWSVALPGEVTWPAAVVGEGDLVAVGTRGGQLVLTHTSGRPFATYAARDEVTAPATLIGGHVLYGAWDGTLRRVELQSGSEVWRHQARAEFTGAPTVWGGRLLAPSRDGHLHALSLRTGELAWAYRAGGSLAASPLVWAGAALQCDETGWLHALDARSGTPLWKVEVGTVHATPALLPGPPGTATLVIATWEGEVHAIGLEVQNGRAALAGEDAIRWTYDVEDEVWASPALTALDLPPDSGAAPDASAAPGGVVVVAGWGGKVRGLRLADGEDLWERTLDGRVTASPVISAGLVFLATEGGELLALDVRNGEVRWTCRERSGVQATPLAASGTLYVAFMDGTLRAYRNAHPEWRSEQEG.

The Protein kinase domain maps to 13–272 (YELLALLGEG…SGAALAHLWA (260 aa)). Residues 19 to 27 (LGEGGSAQV) and Lys42 each bind ATP. Residue Asp137 is the Proton acceptor of the active site.

The protein belongs to the protein kinase superfamily. Ser/Thr protein kinase family. It depends on pyrroloquinoline quinone as a cofactor. Autophosphorylated.

The enzyme catalyses L-seryl-[protein] + ATP = O-phospho-L-seryl-[protein] + ADP + H(+). It carries out the reaction L-threonyl-[protein] + ATP = O-phospho-L-threonyl-[protein] + ADP + H(+). Autokinase activity is stimulated by DNA damage. Stimulated by PQQ and DNA ends in vitro. Plays an important role in radiation resistance and DNA double-strand break (DSB) repair. Involved in transcriptional regulation of genes important for bacterial stress response. Phosphorylates PprA in vitro. This chain is DNA damage-responsive serine/threonine-protein kinase RqkA (rqkA), found in Deinococcus radiodurans (strain ATCC 13939 / DSM 20539 / JCM 16871 / CCUG 27074 / LMG 4051 / NBRC 15346 / NCIMB 9279 / VKM B-1422 / R1).